Reading from the N-terminus, the 148-residue chain is FAD synthase (148 aa).

ATP is bound by residues 14-15, 19-22, and Asp-100; these read VF and HAGH.

This sequence belongs to the archaeal FAD synthase family. In terms of assembly, homodimer. A divalent metal cation is required as a cofactor.

It catalyses the reaction FMN + ATP + H(+) = FAD + diphosphate. It participates in cofactor biosynthesis; FAD biosynthesis; FAD from FMN: step 1/1. In terms of biological role, catalyzes the transfer of the AMP portion of ATP to flavin mononucleotide (FMN) to produce flavin adenine dinucleotide (FAD) coenzyme. The sequence is that of FAD synthase from Pyrococcus horikoshii (strain ATCC 700860 / DSM 12428 / JCM 9974 / NBRC 100139 / OT-3).